The sequence spans 91 residues: Small ribosomal subunit protein uS19 (91 aa).

It belongs to the universal ribosomal protein uS19 family.

Its function is as follows. Protein S19 forms a complex with S13 that binds strongly to the 16S ribosomal RNA. The polypeptide is Small ribosomal subunit protein uS19 (Prochlorococcus marinus (strain MIT 9211)).